A 260-amino-acid polypeptide reads, in one-letter code: Tryptophan 2,3-dioxygenase (260 aa).

Residues 34–38 and Arg100 contribute to the substrate site; that span reads FIVIH. Position 219 (His219) interacts with heme. Residue Thr233 coordinates substrate.

It belongs to the tryptophan 2,3-dioxygenase family. In terms of assembly, homotetramer. Heme is required as a cofactor.

It carries out the reaction L-tryptophan + O2 = N-formyl-L-kynurenine. Its pathway is amino-acid degradation; L-tryptophan degradation via kynurenine pathway; L-kynurenine from L-tryptophan: step 1/2. Heme-dependent dioxygenase that catalyzes the oxidative cleavage of the L-tryptophan (L-Trp) pyrrole ring and converts L-tryptophan to N-formyl-L-kynurenine. Catalyzes the oxidative cleavage of the indole moiety. In Herpetosiphon aurantiacus (strain ATCC 23779 / DSM 785 / 114-95), this protein is Tryptophan 2,3-dioxygenase.